The primary structure comprises 386 residues: Dual-specificity RNA methyltransferase RlmN (386 aa).

Catalysis depends on Glu94, which acts as the Proton acceptor. In terms of domain architecture, Radical SAM core spans 100–341 (EENRGTLCIS…VTTIRKTRGD (242 aa)). A disulfide bridge connects residues Cys107 and Cys347. [4Fe-4S] cluster contacts are provided by Cys114, Cys118, and Cys121. S-adenosyl-L-methionine contacts are provided by residues 173-174 (GE), Ser205, 227-229 (SLH), and Asn304. Cys347 functions as the S-methylcysteine intermediate in the catalytic mechanism.

Belongs to the radical SAM superfamily. RlmN family. Requires [4Fe-4S] cluster as cofactor.

The protein resides in the cytoplasm. The catalysed reaction is adenosine(2503) in 23S rRNA + 2 reduced [2Fe-2S]-[ferredoxin] + 2 S-adenosyl-L-methionine = 2-methyladenosine(2503) in 23S rRNA + 5'-deoxyadenosine + L-methionine + 2 oxidized [2Fe-2S]-[ferredoxin] + S-adenosyl-L-homocysteine. It carries out the reaction adenosine(37) in tRNA + 2 reduced [2Fe-2S]-[ferredoxin] + 2 S-adenosyl-L-methionine = 2-methyladenosine(37) in tRNA + 5'-deoxyadenosine + L-methionine + 2 oxidized [2Fe-2S]-[ferredoxin] + S-adenosyl-L-homocysteine. Specifically methylates position 2 of adenine 2503 in 23S rRNA and position 2 of adenine 37 in tRNAs. m2A2503 modification seems to play a crucial role in the proofreading step occurring at the peptidyl transferase center and thus would serve to optimize ribosomal fidelity. The sequence is that of Dual-specificity RNA methyltransferase RlmN from Herminiimonas arsenicoxydans.